We begin with the raw amino-acid sequence, 343 residues long: Pentatricopeptide repeat-containing protein At1g06270 (343 aa).

PPR repeat units follow at residues 98 to 133 (PKIV…GCLP), 134 to 169 (NPQT…GYSP), 170 to 204 (DTGT…GCIP), 205 to 240 (DVES…GISP), 241 to 275 (RKGM…DYPV), and 276 to 310 (EFES…GFIP).

It belongs to the PPR family. P subfamily.

This is Pentatricopeptide repeat-containing protein At1g06270 from Arabidopsis thaliana (Mouse-ear cress).